We begin with the raw amino-acid sequence, 342 residues long: DNA repair protein RAD51 homolog 1 (342 aa).

Residues 1–24 (MTTMEQRRNQNAVQQQDDEETQHG) are disordered. Residues 51–80 (TVEGVAYTPRKDLLQIKGISDAKVDKIVEA) enclose the HhH domain. One can recognise a FtsK domain in the interval 100–314 (QEIIQITSGS…LRKGRAEERI (215 aa)). Position 130 to 137 (130 to 137 (GEFRSGKT)) interacts with ATP.

Belongs to the RecA family. RAD51 subfamily. In terms of assembly, self-associates and interacts with XRCC3. Binds to RAD54/CHR25. Interacts with BRCA2A and BRCA2B. Can form a tripartite complex with both BRCA2B and DSS1(I). Detected in various tissues. Higher expression in reproductive tissues than in vegetative tissues, with the highest expression level in young flower buds. At cellular level, is expressed at low levels in flower primordia, then at higher levels in young anthers and at highest levels in both females and males meiocytes. Not detected in gametophytes.

The protein localises to the nucleus. Binds to single and double-stranded DNA and exhibits DNA-dependent ATPase activity. Unwinds duplex DNA. Component of the meiotic recombination pathway. Seems to play a role in mediating chromosome homology search, chromosome pairing and synapsis at early stages and probably chromosome crossing-over at later stages in meiosis. Probably is involved in the repair of meiotic double strand breaks (DBSs) generated by AtSPO11-1 and in homologous recombination. Its function is dispensable for vegetative growth and root mitosis. This is DNA repair protein RAD51 homolog 1 from Arabidopsis thaliana (Mouse-ear cress).